Here is a 602-residue protein sequence, read N- to C-terminus: uncharacterized protein (602 aa).

Residues 51–210 (QYLGTQPRDF…PFVSYQPDAD (160 aa)) form the Helicase ATP-binding domain. Residues 430–439 (PHRESAHDPL) show a composition bias toward basic and acidic residues. Disordered stretches follow at residues 430–452 (PHRE…TERG) and 518–538 (RAQL…ASVH). Over residues 523–534 (KGATQPATSGAS) the composition is skewed to polar residues.

It to M.leprae ML1624.

This is an uncharacterized protein from Mycobacterium tuberculosis (strain ATCC 25618 / H37Rv).